The sequence spans 697 residues: Histone-lysine N-methyltransferase SETDB2 (697 aa).

Positions 172-242 (LKKENPLNLP…DNFSFSTQVQ (71 aa)) constitute an MBD domain. A Pre-SET domain is found at 304 to 378 (KCCSCTDGCL…LCQNRVVQHG (75 aa)). Zn(2+)-binding residues include C306, C308, C312, C318, C320, C359, C363, C365, and C370. The 292-residue stretch at 381-672 (LRLQVFKTDT…AGTELTWDYN (292 aa)) folds into the SET domain. 391 to 393 (KGW) serves as a coordination point for S-adenosyl-L-methionine. Disordered stretches follow at residues 438–461 (KEDN…HSDS) and 529–605 (VHNS…STSP). Over residues 565 to 581 (SGYVSEESSSSVISGGH) the composition is skewed to low complexity. S-adenosyl-L-methionine-binding positions include R626 and 629 to 630 (NH). Residues C632, C685, C687, and C692 each coordinate Zn(2+).

Belongs to the class V-like SAM-binding methyltransferase superfamily.

Its subcellular location is the nucleus. The protein localises to the chromosome. It catalyses the reaction N(6),N(6)-dimethyl-L-lysyl(9)-[histone H3] + S-adenosyl-L-methionine = N(6),N(6),N(6)-trimethyl-L-lysyl(9)-[histone H3] + S-adenosyl-L-homocysteine + H(+). Functionally, histone methyltransferase involved in left-right axis specification in early development and mitosis. Specifically trimethylates 'Lys-9' of histone H3 (H3K9me3). H3K9me3 represents a specific tag for epigenetic transcriptional repression by recruiting HP1 (CBX1, CBX3 and/or CBX5) proteins to methylated histones. Contributes to H3K9me3 in both the interspersed repetitive elements and centromere-associated repeats. Plays a role in chromosome condensation and segregation during mitosis. In Xenopus tropicalis (Western clawed frog), this protein is Histone-lysine N-methyltransferase SETDB2 (setdb2).